The following is a 343-amino-acid chain: tRNA N6-adenosine threonylcarbamoyltransferase (343 aa).

Fe cation-binding residues include H116 and H120. Substrate contacts are provided by residues 138 to 142, D172, G185, D189, and N277; that span reads LVSGG. A Fe cation-binding site is contributed by D305.

Belongs to the KAE1 / TsaD family. It depends on Fe(2+) as a cofactor.

It is found in the cytoplasm. The catalysed reaction is L-threonylcarbamoyladenylate + adenosine(37) in tRNA = N(6)-L-threonylcarbamoyladenosine(37) in tRNA + AMP + H(+). Required for the formation of a threonylcarbamoyl group on adenosine at position 37 (t(6)A37) in tRNAs that read codons beginning with adenine. Is involved in the transfer of the threonylcarbamoyl moiety of threonylcarbamoyl-AMP (TC-AMP) to the N6 group of A37, together with TsaE and TsaB. TsaD likely plays a direct catalytic role in this reaction. The chain is tRNA N6-adenosine threonylcarbamoyltransferase from Mycobacterium ulcerans (strain Agy99).